Here is a 248-residue protein sequence, read N- to C-terminus: 7-cyano-7-deazaguanine synthase (248 aa).

ATP is bound at residue 22–32; sequence LSGGLDSTTCL. Zn(2+) is bound by residues Cys-216, Cys-225, Cys-228, and Cys-231.

Belongs to the QueC family. The cofactor is Zn(2+).

It carries out the reaction 7-carboxy-7-deazaguanine + NH4(+) + ATP = 7-cyano-7-deazaguanine + ADP + phosphate + H2O + H(+). The protein operates within purine metabolism; 7-cyano-7-deazaguanine biosynthesis. Catalyzes the ATP-dependent conversion of 7-carboxy-7-deazaguanine (CDG) to 7-cyano-7-deazaguanine (preQ(0)). The protein is 7-cyano-7-deazaguanine synthase of Leptospira biflexa serovar Patoc (strain Patoc 1 / Ames).